The sequence spans 242 residues: MYKRPRFNRVLLKLSGEVLMGPGQFGIDPATVARVADEIRAAREAGYQLCIVVGGGNIFRGLAATARGIERSSADYMGMLATVMNAIAVQNALENLGVDTRVQSAIPMPTVCEPFIRRRAERHMEKGRVVIFAAGTGNPFFTTDSGAALRAAEMKCDALFKGTSVDGVYDADPKKVKEARRYDCVSFNRVLADDLKVMDASATALCRDNNIPIVVFNIREQGNFSRVLKGDGVSTIVCNEEE.

13 to 16 (KLSG) contacts ATP. A UMP-binding site is contributed by Gly-55. Positions 56 and 60 each coordinate ATP. Residues Asp-75 and 136 to 143 (TGNPFFTT) each bind UMP. Positions 163, 169, and 172 each coordinate ATP.

The protein belongs to the UMP kinase family. Homohexamer.

The protein localises to the cytoplasm. It catalyses the reaction UMP + ATP = UDP + ADP. The protein operates within pyrimidine metabolism; CTP biosynthesis via de novo pathway; UDP from UMP (UMPK route): step 1/1. Its activity is regulated as follows. Inhibited by UTP. Its function is as follows. Catalyzes the reversible phosphorylation of UMP to UDP. This chain is Uridylate kinase, found in Zymomonas mobilis subsp. mobilis (strain ATCC 31821 / ZM4 / CP4).